We begin with the raw amino-acid sequence, 65 residues long: uncharacterized protein (65 aa).

It localises to the plastid. The protein resides in the chloroplast. This is an uncharacterized protein from Guillardia theta (Cryptophyte).